The chain runs to 384 residues: Magnesium transporter MRS2-I (384 aa).

The next 2 helical transmembrane spans lie at 319–339 (LFLS…GIFG) and 356–376 (WVVL…VAYA). The Required for magnesium transport activity motif lies at 339–341 (GMN).

Belongs to the CorA metal ion transporter (MIT) (TC 1.A.35.5) family.

The protein localises to the membrane. In terms of biological role, magnesium transporter that may mediate the influx of magnesium. In Oryza sativa subsp. japonica (Rice), this protein is Magnesium transporter MRS2-I (MRS2-I).